The following is a 64-amino-acid chain: DNA gyrase inhibitor YacG (64 aa).

Residues C9, C12, C28, and C32 each contribute to the Zn(2+) site.

Belongs to the DNA gyrase inhibitor YacG family. Interacts with GyrB. It depends on Zn(2+) as a cofactor.

Its function is as follows. Inhibits all the catalytic activities of DNA gyrase by preventing its interaction with DNA. Acts by binding directly to the C-terminal domain of GyrB, which probably disrupts DNA binding by the gyrase. This Enterobacter sp. (strain 638) protein is DNA gyrase inhibitor YacG.